Reading from the N-terminus, the 613-residue chain is Ribosome-associated molecular chaperone SSB1 (613 aa).

The nucleotide binding domain (NBD) stretch occupies residues 1-391 (MAEGVFPGAI…ILTGQSTSDE (391 aa)). Residues 16-18 (TTY), K73, 205-207 (GGT), 271-278 (ERAKRTLS), and G342 contribute to the ATP site. The interval 392–402 (TKDLLLLDVAP) is inter-domain linker. A substrate binding domain (SBD) region spans residues 403–613 (LSLGVGMAGD…RAVTKAMSTR (211 aa)). A lid domain (SBDalpha) region spans residues 516–612 (SEEIEQMVNQ…KRAVTKAMST (97 aa)). The short motif at 574 to 582 (VEAALADAF) is the Nuclear export signal element.

It belongs to the heat shock protein 70 family. Ssb-type Hsp70 subfamily. As to quaternary structure, binds to ribosomes. Binds close to the ribosomal tunnel exit via contacts with both ribosomal proteins and rRNA. Directly interacts with nascent polypeptides. This interaction is dependent on the ribosome-associated complex (RAC). Interacts with SSE1. Interacts with FES1.

The protein localises to the cytoplasm. It carries out the reaction ATP + H2O = ADP + phosphate + H(+). Its function is as follows. Ribosome-bound, Hsp70-type chaperone that assists in the cotranslational folding of newly synthesized proteins in the cytosol. Stimulates folding by interacting with nascent chains, binding to short, largely hydrophobic sequences exposed by unfolded proteins, thereby stabilizing longer, more slowly translated, and aggregation-prone nascent polypeptides and domains that cannot fold stably until fully synthesized. The Hsp70-protein substrate interaction depends on ATP-binding and on allosteric regulation between the NBD and the SBD. The ATP-bound state is characterized by a fast exchange rate of substrate (low affinity state), while in the ADP-bound state exchange is much slower (high affinity state). During the Hsp70 cycle, the chaperone switches between the ATP-bound state (open conformation) and the ADP-bound state (closed conformation) by major conformational rearrangements involving mainly the lid domain. Ssb cooperates with a specific Hsp40/Hsp70 co-chaperone termed the ribosome-associated complex (RAC), which stimulates the ATPase activity of the ribosome-associated pool of Ssbs and switches it to the high affinity substrate binding state. Hsp110 chaperone SSE1 and FES1 act as nucleotide exchange factors that cause substrate release. This chain is Ribosome-associated molecular chaperone SSB1 (SSB1), found in Kluyveromyces marxianus (Yeast).